Consider the following 399-residue polypeptide: Accessory Sec system protein translocase subunit SecY2 (399 aa).

10 consecutive transmembrane segments (helical) span residues 14-34 (ILFTCFILIVYIFGSNISIVG), 60-80 (LNVFSLGLGPWLTSLVIIMLL), 102-122 (IITIVFAIFQSYFVISTYIHN), 128-148 (SNIILLMLILVAGTMLLVWLA), 152-172 (ITYGICGPMPIVLTSLIKSLF), 184-204 (VLLLILVIVTLVIALLILLFI), 238-258 (ISIMISLSVYVLLNNMINLIA), 272-292 (FANPIGIMFYIVLQIVLSYLL), 335-355 (WTGAILVALILAVPLYSTLLV), and 362-382 (IYFSMQLIILVYISINIGETI).

Belongs to the SecY/SEC61-alpha family. SecY2 subfamily. As to quaternary structure, component of the accessory SecA2/SecY2 protein translocase complex required to export cell wall proteins. May form heterotrimers with SecE and SecG subunits.

The protein resides in the cell membrane. Part of the accessory SecA2/SecY2 system specifically required for export of possible cell wall proteins. The central subunit of a protein translocation channel. This is Accessory Sec system protein translocase subunit SecY2 from Staphylococcus haemolyticus (strain JCSC1435).